A 417-amino-acid chain; its full sequence is Serine--tRNA ligase (417 aa).

232–234 (TAE) is a binding site for L-serine. 263–265 (RKE) serves as a coordination point for ATP. Position 286 (Glu286) interacts with L-serine. 350–353 (EISS) contacts ATP. Ser385 is an L-serine binding site.

It belongs to the class-II aminoacyl-tRNA synthetase family. Type-1 seryl-tRNA synthetase subfamily. Homodimer. The tRNA molecule binds across the dimer.

The protein localises to the cytoplasm. It carries out the reaction tRNA(Ser) + L-serine + ATP = L-seryl-tRNA(Ser) + AMP + diphosphate + H(+). It catalyses the reaction tRNA(Sec) + L-serine + ATP = L-seryl-tRNA(Sec) + AMP + diphosphate + H(+). Its pathway is aminoacyl-tRNA biosynthesis; selenocysteinyl-tRNA(Sec) biosynthesis; L-seryl-tRNA(Sec) from L-serine and tRNA(Sec): step 1/1. Catalyzes the attachment of serine to tRNA(Ser). Is also able to aminoacylate tRNA(Sec) with serine, to form the misacylated tRNA L-seryl-tRNA(Sec), which will be further converted into selenocysteinyl-tRNA(Sec). This is Serine--tRNA ligase from Sulfurihydrogenibium sp. (strain YO3AOP1).